A 228-amino-acid polypeptide reads, in one-letter code: Probable ribosomal RNA small subunit methyltransferase A (228 aa).

Histidine 9, leucine 11, glycine 34, glutamate 55, aspartate 78, and asparagine 93 together coordinate S-adenosyl-L-methionine.

This sequence belongs to the class I-like SAM-binding methyltransferase superfamily. rRNA adenine N(6)-methyltransferase family. RsmA subfamily.

The protein localises to the cytoplasm. Functionally, specifically dimethylates two adjacent adenosines in the loop of a conserved hairpin near the 3'-end of 16S rRNA in the 30S particle. May play a critical role in biogenesis of 30S subunits. In Pyrobaculum aerophilum (strain ATCC 51768 / DSM 7523 / JCM 9630 / CIP 104966 / NBRC 100827 / IM2), this protein is Probable ribosomal RNA small subunit methyltransferase A.